The sequence spans 1582 residues: Hybrid PKS-NRPS synthetase TAS1 (1582 aa).

Residues 33–387 are condensation (C) domain; that stretch reads IPLSKVQEVL…GEDTAAASRV (355 aa). Positions 499-892 are adenylation (A) domain; it reads RSRAATQPDE…KLHILGRMNN (394 aa). Residues 1015–1092 form the Carrier domain; sequence NLVDRLEASI…RQAQRLSELV (78 aa). In terms of domain architecture, Ketosynthase family 3 (KS3) spans 1127 to 1574; the sequence is APLFAIVGMA…GVNAHCILAS (448 aa). Catalysis depends on for beta-ketoacyl synthase activity residues cysteine 1294 and histidine 1432. The tract at residues 1460–1485 is disordered; sequence ESRCSSGAISPTGTEQQPSDTKQTPR. Over residues 1462–1485 the composition is skewed to polar residues; it reads RCSSGAISPTGTEQQPSDTKQTPR. The For beta-ketoacyl synthase activity role is filled by asparagine 1498.

This sequence in the N-terminal section; belongs to the NRP synthetase family. Requires pantetheine 4'-phosphate as cofactor.

It catalyses the reaction acetoacetyl-CoA + L-isoleucine + ATP = tenuazonic acid + AMP + diphosphate + CoA + 2 H(+). Hybrid PKS-NRPS synthetase that mediates the biosynthesis of the toxin tenuazonic acid (TeA), an inhibitor of protein biosynthesis on ribosomes by suppressing the release of new protein. TAS1 alone is sufficient for TeA synthesis via the condensation of isoleucine (Ile) with acetoacetyl-CoA by the N-terminal NRPS module and subsequent cyclization conducted by the C-terminal KS domain. This Cordyceps militaris (strain CM01) (Caterpillar fungus) protein is Hybrid PKS-NRPS synthetase TAS1.